We begin with the raw amino-acid sequence, 344 residues long: tRNA N6-adenosine threonylcarbamoyltransferase (344 aa).

Residues His-110 and His-114 each contribute to the Fe cation site. Substrate-binding positions include 133–137 (VVSGA), Asp-166, Gly-179, and Asn-278. Asp-303 provides a ligand contact to Fe cation.

This sequence belongs to the KAE1 / TsaD family. It depends on Fe(2+) as a cofactor.

Its subcellular location is the cytoplasm. It catalyses the reaction L-threonylcarbamoyladenylate + adenosine(37) in tRNA = N(6)-L-threonylcarbamoyladenosine(37) in tRNA + AMP + H(+). In terms of biological role, required for the formation of a threonylcarbamoyl group on adenosine at position 37 (t(6)A37) in tRNAs that read codons beginning with adenine. Is involved in the transfer of the threonylcarbamoyl moiety of threonylcarbamoyl-AMP (TC-AMP) to the N6 group of A37, together with TsaE and TsaB. TsaD likely plays a direct catalytic role in this reaction. This is tRNA N6-adenosine threonylcarbamoyltransferase from Chlamydia abortus (strain DSM 27085 / S26/3) (Chlamydophila abortus).